The sequence spans 95 residues: Integration host factor subunit beta (95 aa).

Belongs to the bacterial histone-like protein family. As to quaternary structure, heterodimer of an alpha and a beta chain.

Functionally, this protein is one of the two subunits of integration host factor, a specific DNA-binding protein that functions in genetic recombination as well as in transcriptional and translational control. This chain is Integration host factor subunit beta, found in Paracoccus denitrificans (strain Pd 1222).